The primary structure comprises 457 residues: Peptidyl-prolyl cis-trans isomerase FKBP5 (457 aa).

Met1 bears the N-acetylmethionine mark. Over residues 1–11 (MTTDEGAKNSR) the composition is skewed to basic and acidic residues. A disordered region spans residues 1 to 27 (MTTDEGAKNSRENPTATVAEQGEDVTS). Lys28 is modified (N6-acetyllysine). PPIase FKBP-type domains follow at residues 50–138 (GDKV…LDFK) and 165–251 (GARV…KSFE). TPR repeat units follow at residues 268-301 (AAIV…LEME), 317-350 (LAAF…DSAN), and 351-384 (EKGL…NPQN). The tract at residues 423 to 457 (EEANKAMSKKTSEGVTNEKLAVSHAVEEEKPEGHV) is disordered. Residue Ser445 is modified to Phosphoserine. The segment covering 447–457 (AVEEEKPEGHV) has biased composition (basic and acidic residues).

Part of a heteromultimeric cytoplasmic complex with HSP90AA1, HSPA1A/HSPA1B and steroid receptors. Upon ligand binding dissociates from the complex and FKBP4 takes its place. Interacts with functionally mature heterooligomeric progesterone receptor complexes along with HSP90 and TEBP. Interacts with NR3C1. Interacts with Akt/AKT1 and PHLPP1; enhancing dephosphorylation and subsequent activation of Akt/AKT1. Interacts with IFI44L; this interaction modulates the kinase activity of IKBKB and IKBKE. Interacts with IKBKB and IKBKE. Post-translationally, acetylation impairs ability to promote interaction between Akt/AKT1 and PHLPP1. Deacetylation by SIRT7 promotes interaction between Akt/AKT1 and PHLPP1, leading to suppress Akt/AKT1 activation. In terms of processing, ubiquitinated, leading to degradation in a proteasome-dependent manner. Deubiquitinated by USP49, leading to stabilization.

Its subcellular location is the cytoplasm. It localises to the nucleus. The enzyme catalyses [protein]-peptidylproline (omega=180) = [protein]-peptidylproline (omega=0). Its activity is regulated as follows. Inhibited by both FK506 and rapamycin. Immunophilin protein with PPIase and co-chaperone activities. Component of unligated steroid receptors heterocomplexes through interaction with heat-shock protein 90 (HSP90). Plays a role in the intracellular trafficking of heterooligomeric forms of steroid hormone receptors maintaining the complex into the cytoplasm when unliganded. Acts as a regulator of Akt/AKT1 activity by promoting the interaction between Akt/AKT1 and PHLPP1, thereby enhancing dephosphorylation and subsequent activation of Akt/AKT1. Interacts with IKBKE and IKBKB which facilitates IKK complex assembly leading to increased IKBKE and IKBKB kinase activity, NF-kappaB activation, and IFN production. In Aotus nancymaae (Ma's night monkey), this protein is Peptidyl-prolyl cis-trans isomerase FKBP5 (FKBP5).